The chain runs to 150 residues: Catabolic 3-dehydroquinase 2 (150 aa).

Residue Tyr-23 is the Proton acceptor of the active site. Residues Asn-74, His-80, and Asp-87 each contribute to the substrate site. The active-site Proton donor is the His-100. Substrate is bound by residues 101–102 (IT) and Arg-111.

It belongs to the type-II 3-dehydroquinase family. In terms of assembly, homododecamer. Adopts a ring-like structure, composed of an arrangement of two hexameric rings stacked on top of one another.

It carries out the reaction 3-dehydroquinate = 3-dehydroshikimate + H2O. Its pathway is aromatic compound metabolism; 3,4-dihydroxybenzoate biosynthesis; 3,4-dihydroxybenzoate from 3-dehydroquinate: step 1/2. In terms of biological role, is involved in the catabolism of quinate. Allows the utilization of quinate as carbon source via the beta-ketoadipate pathway. This is Catabolic 3-dehydroquinase 2 from Neosartorya fischeri (strain ATCC 1020 / DSM 3700 / CBS 544.65 / FGSC A1164 / JCM 1740 / NRRL 181 / WB 181) (Aspergillus fischerianus).